Reading from the N-terminus, the 295-residue chain is Polyprenyl transferase dpmaC (295 aa).

The next 8 membrane-spanning stretches (helical) occupy residues 39-59 (LFCV…NDWI), 84-104 (QAFV…HVML), 109-124 (VHVI…YPFL), 131-151 (KLHI…AIPG), 168-188 (YCLP…TAYS), 213-233 (LVLV…LTQF), 237-257 (WLWV…LALF), and 271-291 (SNFV…LLKA).

Belongs to the UbiA prenyltransferase family. Requires Mg(2+) as cofactor.

The protein localises to the membrane. The protein operates within secondary metabolite biosynthesis; terpenoid biosynthesis. Functionally, polyprenyl transferase; part of the gene cluster that mediates the biosynthesis of the diterpenoid pyrones subglutinols A and B. The first step of the pathway is the synthesis of the alpha-pyrone moiety by the polyketide synthase dpmaA via condensation of one acetyl-CoA starter unit with 3 malonyl-CoA units and 2 methylations. The alpha-pyrone is then combined with geranylgeranyl pyrophosphate (GGPP) formed by the GGPP synthase dpmaD through the action of the prenyltransferase dpmaC to yield a linear alpha-pyrone diterpenoid. Subsequent steps in the diterpenoid pyrone biosynthetic pathway involve the decalin core formation, which is initiated by the epoxidation of the C10-C11 olefin by the FAD-dependent oxidoreductase dpmaE, and is followed by a cyclization cascade catalyzed by the terpene cyclase dpmaB. The dehydrogenase dpmaF is then involved in tetrahydrofuran (THF) ring formation at the C5 unit to complete the formation of subglutinols A and B. The chain is Polyprenyl transferase dpmaC from Metarhizium anisopliae (Entomophthora anisopliae).